A 185-amino-acid polypeptide reads, in one-letter code: Ribosome-recycling factor (185 aa).

Belongs to the RRF family.

The protein resides in the cytoplasm. Its function is as follows. Responsible for the release of ribosomes from messenger RNA at the termination of protein biosynthesis. May increase the efficiency of translation by recycling ribosomes from one round of translation to another. The chain is Ribosome-recycling factor from Thermotoga petrophila (strain ATCC BAA-488 / DSM 13995 / JCM 10881 / RKU-1).